The chain runs to 162 residues: MEDNKTTIINRLEAVKRNSGKSCSQIAEQTGLTNVYVAQLLRRQAQLNPDTAPSLRAALPELPEDLLQEMMRPPMRSYDPNLIQEPCVYRLNEAVMHFGESIKEIINEEFGDGIMSAIDFYCSVDKVKGVDGKDRVVVTFDGKYLPYTEQKSEHMVSRPRPH.

Catalysis depends on residues Arg-90, Glu-93, and Ser-116.

Belongs to the cyanase family.

The enzyme catalyses cyanate + hydrogencarbonate + 3 H(+) = NH4(+) + 2 CO2. In terms of biological role, catalyzes the reaction of cyanate with bicarbonate to produce ammonia and carbon dioxide. In Populus trichocarpa (Western balsam poplar), this protein is Cyanate hydratase.